The primary structure comprises 245 residues: Ribosomal RNA large subunit methyltransferase E (245 aa).

The disordered stretch occupies residues 1–25 (MTKSPIGGNRSGRKLGQKVKKGKLK). Positions 11 to 25 (SGRKLGQKVKKGKLK) are enriched in basic residues. G81, W83, D104, D120, and D144 together coordinate S-adenosyl-L-methionine. The active-site Proton acceptor is K184.

Belongs to the class I-like SAM-binding methyltransferase superfamily. RNA methyltransferase RlmE family.

The protein localises to the cytoplasm. It carries out the reaction uridine(2552) in 23S rRNA + S-adenosyl-L-methionine = 2'-O-methyluridine(2552) in 23S rRNA + S-adenosyl-L-homocysteine + H(+). Functionally, specifically methylates the uridine in position 2552 of 23S rRNA at the 2'-O position of the ribose in the fully assembled 50S ribosomal subunit. The chain is Ribosomal RNA large subunit methyltransferase E from Rhizobium meliloti (strain 1021) (Ensifer meliloti).